Reading from the N-terminus, the 215-residue chain is N-(5'-phosphoribosyl)anthranilate isomerase (215 aa).

Belongs to the TrpF family.

It catalyses the reaction N-(5-phospho-beta-D-ribosyl)anthranilate = 1-(2-carboxyphenylamino)-1-deoxy-D-ribulose 5-phosphate. It participates in amino-acid biosynthesis; L-tryptophan biosynthesis; L-tryptophan from chorismate: step 3/5. The sequence is that of N-(5'-phosphoribosyl)anthranilate isomerase from Rippkaea orientalis (strain PCC 8801 / RF-1) (Cyanothece sp. (strain PCC 8801)).